The sequence spans 613 residues: Dihydroxy-acid dehydratase (613 aa).

D81 contacts Mg(2+). C122 is a [2Fe-2S] cluster binding site. Residues D123 and K124 each coordinate Mg(2+). At K124 the chain carries N6-carboxylysine. C193 serves as a coordination point for [2Fe-2S] cluster. A Mg(2+)-binding site is contributed by E489. The active-site Proton acceptor is the S515.

Belongs to the IlvD/Edd family. As to quaternary structure, homodimer. [2Fe-2S] cluster is required as a cofactor. Mg(2+) serves as cofactor.

The enzyme catalyses (2R)-2,3-dihydroxy-3-methylbutanoate = 3-methyl-2-oxobutanoate + H2O. The catalysed reaction is (2R,3R)-2,3-dihydroxy-3-methylpentanoate = (S)-3-methyl-2-oxopentanoate + H2O. The protein operates within amino-acid biosynthesis; L-isoleucine biosynthesis; L-isoleucine from 2-oxobutanoate: step 3/4. It participates in amino-acid biosynthesis; L-valine biosynthesis; L-valine from pyruvate: step 3/4. Its function is as follows. Functions in the biosynthesis of branched-chain amino acids. Catalyzes the dehydration of (2R,3R)-2,3-dihydroxy-3-methylpentanoate (2,3-dihydroxy-3-methylvalerate) into 2-oxo-3-methylpentanoate (2-oxo-3-methylvalerate) and of (2R)-2,3-dihydroxy-3-methylbutanoate (2,3-dihydroxyisovalerate) into 2-oxo-3-methylbutanoate (2-oxoisovalerate), the penultimate precursor to L-isoleucine and L-valine, respectively. In Pseudomonas putida (strain ATCC 700007 / DSM 6899 / JCM 31910 / BCRC 17059 / LMG 24140 / F1), this protein is Dihydroxy-acid dehydratase.